A 287-amino-acid chain; its full sequence is Cis-prenyltransferase 7, chloroplastic (287 aa).

Residues 1-34 (MLSLGFSLPPPSDNKLIITNNNQYNYRTNLANVC) constitute a chloroplast transit peptide. The active site involves aspartate 61.

Belongs to the UPP synthase family. Mg(2+) is required as a cofactor. Expressed in leaf trichomes and stem trichomes.

The protein localises to the plastid. It is found in the chloroplast. Functionally, uses geranylgeranyl diphosphate to catalyze the cis-prenyl chain elongation and produce polyprenyl diphosphate with a chain of 35 carbons. In Solanum lycopersicum (Tomato), this protein is Cis-prenyltransferase 7, chloroplastic.